The following is a 248-amino-acid chain: MLPEHHDHGHEHGGNGHGHGHRHQVNFDPTAAEPDPYGVAPRGGRAFRLGIGGPVGSGKTALTAALCRALGSEVNLAVVTNDIYTTEDADFLRRAGVLDTDRIEAVQTGACPHTAIRDDITANLDAVEKLEERHPGLELVIVESGGDNLTAVFSRGLADSQVFVVDVAGGDKVPRKGGPGVTTADLLVINKVDLAEQVGADMAVMVADAHRMRGELPVITQSLTRTPNAPDVSAWVRQQLAAGVVVGA.

The segment covering 1-14 (MLPEHHDHGHEHGG) has biased composition (basic and acidic residues). Residues 1 to 36 (MLPEHHDHGHEHGGNGHGHGHRHQVNFDPTAAEPDP) form a disordered region. 53-60 (GPVGSGKT) provides a ligand contact to GTP.

The protein belongs to the SIMIBI class G3E GTPase family. UreG subfamily. As to quaternary structure, homodimer. UreD, UreF and UreG form a complex that acts as a GTP-hydrolysis-dependent molecular chaperone, activating the urease apoprotein by helping to assemble the nickel containing metallocenter of UreC. The UreE protein probably delivers the nickel.

The protein localises to the cytoplasm. In terms of biological role, facilitates the functional incorporation of the urease nickel metallocenter. This process requires GTP hydrolysis, probably effectuated by UreG. This Saccharopolyspora erythraea (strain ATCC 11635 / DSM 40517 / JCM 4748 / NBRC 13426 / NCIMB 8594 / NRRL 2338) protein is Urease accessory protein UreG 1.